Consider the following 531-residue polypeptide: Cytochrome P450 monooxygenase acuC (531 aa).

A helical membrane pass occupies residues 3–23 (PIVWLLGGAIALLVVVIRAAW). Cys-447 contributes to the heme binding site.

It belongs to the cytochrome P450 family. Requires heme as cofactor.

The protein resides in the endoplasmic reticulum membrane. It carries out the reaction 3-methylphenol + reduced [NADPH--hemoprotein reductase] + O2 = 3-hydroxybenzyl alcohol + oxidized [NADPH--hemoprotein reductase] + H2O + H(+). Its pathway is secondary metabolite biosynthesis. Cytochrome P450 monooxygenase; part of the gene cluster that mediates the biosynthesis of aculins. The pathway begins with the synthesis of 6-methylsalicylic acid by the polyketide synthase (PKS) acuA via condensation of acetate and malonate units. The 6-methylsalicylic acid decarboxylase acuB then catalyzes the decarboxylation of 6-methylsalicylic acid to yield m-cresol (also known as 3-methylphenol). These first reactions occur in the cytosol. The intermediate m-cresol is then transported into the endoplasmic reticulum where the cytochrome P450 monooxygenase acuC converts it to m-hydroxybenzyl alcohol, which is further converted to gentisyl alcohol by the cytochrome P450 monooxygenase acuD. Gentisyl alcohol is further oxidized by the oxidoreductase acuE that probably catalyzes hydroxylation of the aromatic ring. The aromatic system might then be opened by oxidation through a Baeyer-Villiger type of oxidation, which could be catalyzed by acuF, with the carboxylic acid at C-1 subsequently reduced to an aldehyde by acuG. Subsequently, a hemiacetal is formed, before the dehydrogenase acuH would reduce the double bond between C-4 and C-6. Finally, keto-enol tautomerism results in formation of aculinic acid, which exists as two diastereomers (both R/S configurations at C-1) by non-enzymatic hemiacetal formation. The carboxypeptidase acuI could be involved in the linking of aculinic acid to an aculene A moiety produced by the aculene biosynthesis cluster and which leads to the production of aculin A. AcuI may also be involved in the attachment of proline to aculinic acid to form epi-aculins A and B. The polypeptide is Cytochrome P450 monooxygenase acuC (Aspergillus aculeatus (strain ATCC 16872 / CBS 172.66 / WB 5094)).